The sequence spans 335 residues: Fructose-1,6-bisphosphatase class 1 (335 aa).

4 residues coordinate Mg(2+): Glu-90, Asp-112, Leu-114, and Asp-115. Substrate-binding positions include 115 to 118 (DGSS), Asn-210, and Lys-276. Glu-282 is a Mg(2+) binding site.

Belongs to the FBPase class 1 family. Homotetramer. Requires Mg(2+) as cofactor.

Its subcellular location is the cytoplasm. The catalysed reaction is beta-D-fructose 1,6-bisphosphate + H2O = beta-D-fructose 6-phosphate + phosphate. Its pathway is carbohydrate biosynthesis; gluconeogenesis. The sequence is that of Fructose-1,6-bisphosphatase class 1 from Ectopseudomonas mendocina (strain ymp) (Pseudomonas mendocina).